We begin with the raw amino-acid sequence, 804 residues long: Leucine--tRNA ligase (804 aa).

The 'HIGH' region motif lies at proline 40 to histidine 51. The short motif at lysine 576 to serine 580 is the 'KMSKS' region element. Lysine 579 serves as a coordination point for ATP.

The protein belongs to the class-I aminoacyl-tRNA synthetase family.

It is found in the cytoplasm. It catalyses the reaction tRNA(Leu) + L-leucine + ATP = L-leucyl-tRNA(Leu) + AMP + diphosphate. The sequence is that of Leucine--tRNA ligase from Staphylococcus aureus (strain bovine RF122 / ET3-1).